We begin with the raw amino-acid sequence, 193 residues long: Transmembrane protein 276 (193 aa).

The N-terminal stretch at 1–32 (MTPRPGGEWSSALSHLALGAVSLHAALSTAQA) is a signal peptide. A run of 4 helical transmembrane segments spans residues 35-55 (GAAA…ASGL), 63-83 (AGAW…FHWV), 89-109 (SANL…HLGA), and 114-134 (VAGQ…AVFT).

The protein localises to the membrane. The protein is Transmembrane protein 276 of Bos taurus (Bovine).